Here is a 133-residue protein sequence, read N- to C-terminus: Small ribosomal subunit protein bS6 (133 aa).

Belongs to the bacterial ribosomal protein bS6 family.

Functionally, binds together with bS18 to 16S ribosomal RNA. The sequence is that of Small ribosomal subunit protein bS6 from Chlorobium luteolum (strain DSM 273 / BCRC 81028 / 2530) (Pelodictyon luteolum).